Here is a 500-residue protein sequence, read N- to C-terminus: MTIFDNYEVWFVIGSQHLYGPETLHQVTQHAEHVVNALNTEAKLPCKLVLKPLGTTPDEITAICRDANYDDRCAGLVVWLHTFSPAKMWINGLTMLNKPLLQFHTQFNAVLPWDSIDMDFMNLNQTAHGGREFGFIGARMRQQHAVVTGHWQDKQAHERIGSWMRQAVSKQDTRHLKVCRFGDNMREVAVTDGDKVAAQIKFGFSVNTWAVGDLVQVVNSISDGDVNALVDEYESSYTMTPATQIHGEKRQNVLEAARIELGMKRFLEQGGFHAFTTTFEDLHGLKQLPGLAVQRLMQQGYGFAGEGDWKTAALLRIMKVMSTGLQGGTSFMEDYTYHFEKGNDLVLGSHMLEVCPSIAAEEKPILDVQHLGIGGKDDPARLIFNTQTGPAIVASLIDLGDRYRLLVNCIDTVKTPYSLPKLPVANALWKAQPDLPTASEAWILAGGAHHTVFSHALNLNDMRQFAEMHDIEITVIDNDTRLPAFKDALRWNEVYYGFRR.

4 residues coordinate Mn(2+): Glu306, Glu333, His350, and His450.

Belongs to the arabinose isomerase family. As to quaternary structure, homohexamer. Mn(2+) is required as a cofactor.

The catalysed reaction is beta-L-arabinopyranose = L-ribulose. Its pathway is carbohydrate degradation; L-arabinose degradation via L-ribulose; D-xylulose 5-phosphate from L-arabinose (bacterial route): step 1/3. Its function is as follows. Catalyzes the conversion of L-arabinose to L-ribulose. This Escherichia fergusonii (strain ATCC 35469 / DSM 13698 / CCUG 18766 / IAM 14443 / JCM 21226 / LMG 7866 / NBRC 102419 / NCTC 12128 / CDC 0568-73) protein is L-arabinose isomerase.